A 189-amino-acid polypeptide reads, in one-letter code: 7-methyl-GTP pyrophosphatase (189 aa).

The active-site Proton acceptor is the aspartate 71.

It belongs to the Maf family. YceF subfamily. It depends on a divalent metal cation as a cofactor.

The protein localises to the cytoplasm. The catalysed reaction is N(7)-methyl-GTP + H2O = N(7)-methyl-GMP + diphosphate + H(+). Nucleoside triphosphate pyrophosphatase that hydrolyzes 7-methyl-GTP (m(7)GTP). May have a dual role in cell division arrest and in preventing the incorporation of modified nucleotides into cellular nucleic acids. This is 7-methyl-GTP pyrophosphatase from Bdellovibrio bacteriovorus (strain ATCC 15356 / DSM 50701 / NCIMB 9529 / HD100).